A 213-amino-acid chain; its full sequence is Adenylate kinase (213 aa).

An ATP-binding site is contributed by Gly10–Thr15. Residues Ser30–Val59 form an NMP region. AMP is bound by residues Thr31, Arg36, Lys57–Val59, Gly83–Arg86, and Gln90. Residues Asn124–Asp161 form an LID region. Arg125 serves as a coordination point for ATP. Cys128 and Cys131 together coordinate Zn(2+). Position 134–135 (Ser134–Phe135) interacts with ATP. Residues Cys148 and Asp151 each contribute to the Zn(2+) site. Residues Arg158 and Arg169 each contribute to the AMP site. Residue Asp197 coordinates ATP.

This sequence belongs to the adenylate kinase family. As to quaternary structure, monomer.

Its subcellular location is the cytoplasm. The enzyme catalyses AMP + ATP = 2 ADP. Its pathway is purine metabolism; AMP biosynthesis via salvage pathway; AMP from ADP: step 1/1. In terms of biological role, catalyzes the reversible transfer of the terminal phosphate group between ATP and AMP. Plays an important role in cellular energy homeostasis and in adenine nucleotide metabolism. This Mycoplasma mycoides subsp. mycoides SC (strain CCUG 32753 / NCTC 10114 / PG1) protein is Adenylate kinase.